The chain runs to 119 residues: Large ribosomal subunit protein uL14 (119 aa).

This sequence belongs to the universal ribosomal protein uL14 family. As to quaternary structure, part of the 50S ribosomal subunit. Forms a cluster with proteins L3 and L19. In the 70S ribosome, L14 and L19 interact and together make contacts with the 16S rRNA in bridges B5 and B8.

In terms of biological role, binds to 23S rRNA. Forms part of two intersubunit bridges in the 70S ribosome. The polypeptide is Large ribosomal subunit protein uL14 (Wolbachia sp. subsp. Brugia malayi (strain TRS)).